A 704-amino-acid polypeptide reads, in one-letter code: Elongation factor G (704 aa).

The region spanning 8 to 291 (DRVRNIGIMA…AVIEYLASPV (284 aa)) is the tr-type G domain. Residues 17-24 (AHIDAGKT), 90-94 (DTPGH), and 144-147 (NKMD) contribute to the GTP site.

The protein belongs to the TRAFAC class translation factor GTPase superfamily. Classic translation factor GTPase family. EF-G/EF-2 subfamily.

Its subcellular location is the cytoplasm. Catalyzes the GTP-dependent ribosomal translocation step during translation elongation. During this step, the ribosome changes from the pre-translocational (PRE) to the post-translocational (POST) state as the newly formed A-site-bound peptidyl-tRNA and P-site-bound deacylated tRNA move to the P and E sites, respectively. Catalyzes the coordinated movement of the two tRNA molecules, the mRNA and conformational changes in the ribosome. The polypeptide is Elongation factor G (Chlorobium chlorochromatii (strain CaD3)).